An 882-amino-acid chain; its full sequence is Cadherin-1 (882 aa).

An N-terminal signal peptide occupies residues 1 to 22 (MGPWSRSLSALLLLLQVSSWLC). The propeptide occupies 23–154 (QEPEPCHPGF…SSSGLRRRKR (132 aa)). The N-linked (GlcNAc...) asparagine glycan is linked to asparagine 144. 5 consecutive Cadherin domains span residues 155-262 (DWVI…KPEF), 263-375 (TQEV…PPVF), 376-486 (NPTT…APIF), 487-593 (VPPE…DNAP), and 594-697 (IPEP…VCKK). At 155-709 (DWVIPPISCP…PIEAGLQIPA (555 aa)) the chain is on the extracellular side. Aspartate 257 contacts Ca(2+). The O-linked (Man...) serine glycan is linked to serine 280. An O-linked (Man...) threonine glycan is attached at threonine 285. Residue aspartate 288 coordinates Ca(2+). 4 O-linked (Man...) threonine glycosylation sites follow: threonine 358, threonine 470, threonine 472, and threonine 509. A glycan (N-linked (GlcNAc...) asparagine) is linked at asparagine 558. Residues threonine 576, threonine 578, and threonine 580 are each glycosylated (O-linked (Man...) threonine). Asparagine 637 is a glycosylation site (N-linked (GlcNAc...) asparagine). The helical transmembrane segment at 710 to 730 (ILGILGGILALLILILLLLLF) threads the bilayer. At 731 to 882 (LRRRAVVKEP…ADMYGGGEDD (152 aa)) the chain is on the cytoplasmic side. Residues 747-767 (DTRDNVYYYDEEGGGEEDQDF) are disordered. Residues tyrosine 753, tyrosine 754, and tyrosine 755 each carry the phosphotyrosine; by SRC modification. Residues 755 to 767 (YDEEGGGEEDQDF) are compositionally biased toward acidic residues. The tract at residues 758 to 769 (EGGGEEDQDFDL) is required for binding CTNND1 and PSEN1. Phosphoserine occurs at positions 770, 793, 838, 840, and 846. Positions 811–882 (IDENLKAADT…ADMYGGGEDD (72 aa)) are required for binding alpha, beta and gamma catenins.

As to quaternary structure, homodimer; disulfide-linked. Component of an E-cadherin/ catenin adhesion complex composed of at least E-cadherin/CDH1, beta-catenin/CTNNB1 or gamma-catenin/JUP, and potentially alpha-catenin/CTNNA1; the complex is located to adherens junctions. Found in a complex composed of CDH1, RAP1A and PKP3; PKP3 acts as a scaffold protein within the complex, the complex is required for CDH1 localization to mature desmosome cell junctions. Interacts with the TRPV4 and CTNNB1 complex. Interacts with CTNND1. The stable association of CTNNA1 is controversial as CTNNA1 was shown not to bind to F-actin when assembled in the complex. Alternatively, the CTNNA1-containing complex may be linked to F-actin by other proteins such as LIMA1. Interaction with PSEN1, cleaves CDH1 resulting in the disassociation of cadherin-based adherens junctions (CAJs). Interacts with AJAP1 and DLGAP5. Interacts with TBC1D2. Interacts with LIMA1. Interacts with CAV1. Interacts with PIP5K1C. Interacts with RAB8B. Interacts with DDR1; this stabilizes CDH1 at the cell surface and inhibits its internalization. Interacts with RAPGEF2. Interacts with KLRG1. Forms a ternary complex composed of ADAM10, CADH1 and EPHA4; within the complex, CADH1 is cleaved by ADAM10 which disrupts adherens junctions. Interacts with SPEF1. Interacts with CTNNB1 and PKP2. Interacts with AMOTL2; the interaction may facilitate binding of radial actin fibers to cell junction complexes. Interacts with DSG3; the interaction is required for CDH1 localization to developing adherens junctions. During apoptosis or with calcium influx, cleaved by a membrane-bound metalloproteinase (ADAM10), PS1/gamma-secretase and caspase-3. Processing by the metalloproteinase, induced by calcium influx, causes disruption of cell-cell adhesion and the subsequent release of beta-catenin into the cytoplasm. The residual membrane-tethered cleavage product is rapidly degraded via an intracellular proteolytic pathway. Cleavage by caspase-3 releases the cytoplasmic tail resulting in disintegration of the actin microfilament system. The gamma-secretase-mediated cleavage promotes disassembly of adherens junctions. During development of the cochlear organ of Corti, cleavage by ADAM10 at adherens junctions promotes pillar cell separation. Post-translationally, N-glycosylation at Asn-637 is essential for expression, folding and trafficking. Addition of bisecting N-acetylglucosamine by MGAT3 modulates its cell membrane location. In terms of processing, ubiquitinated by a SCF complex containing SKP2, which requires prior phosphorylation by CK1/CSNK1A1. Ubiquitinated by CBLL1/HAKAI, requires prior phosphorylation at Tyr-754. O-glycosylated. O-manosylated by TMTC1, TMTC2, TMTC3 or TMTC4. Thr-285 and Thr-509 are O-mannosylated by TMTC2 or TMTC4 but not TMTC1 or TMTC3.

The protein resides in the cell junction. The protein localises to the adherens junction. Its subcellular location is the cell membrane. It is found in the endosome. It localises to the golgi apparatus. The protein resides in the trans-Golgi network. The protein localises to the cytoplasm. Its subcellular location is the desmosome. In terms of biological role, cadherins are calcium-dependent cell adhesion proteins. They preferentially interact with themselves in a homophilic manner in connecting cells; cadherins may thus contribute to the sorting of heterogeneous cell types. CDH1 is involved in mechanisms regulating cell-cell adhesions, mobility and proliferation of epithelial cells. Promotes organization of radial actin fiber structure and cellular response to contractile forces, via its interaction with AMOTL2 which facilitates anchoring of radial actin fibers to CDH1 junction complexes at the cell membrane. Plays a role in the early stages of desmosome cell-cell junction formation via facilitating the recruitment of DSG2 and DSP to desmosome plaques. Has a potent invasive suppressor role. It is a ligand for integrin alpha-E/beta-7. Functionally, E-Cad/CTF2 promotes non-amyloidogenic degradation of Abeta precursors. Has a strong inhibitory effect on APP C99 and C83 production. The polypeptide is Cadherin-1 (CDH1) (Pongo abelii (Sumatran orangutan)).